Here is an 890-residue protein sequence, read N- to C-terminus: DNA mismatch repair protein MutS (890 aa).

645-652 (GPNMAGKS) provides a ligand contact to ATP.

It belongs to the DNA mismatch repair MutS family.

Functionally, this protein is involved in the repair of mismatches in DNA. It is possible that it carries out the mismatch recognition step. This protein has a weak ATPase activity. The polypeptide is DNA mismatch repair protein MutS (Rickettsia africae (strain ESF-5)).